A 380-amino-acid chain; its full sequence is MQDILLIKYGELALKGDNRSFFENKLIKNIKHALSDFKEVKVEKTHGRIYVECDGDIEEVIERLKKVFGIVGITKAKKTDLNLDEIFKAAVELMKGHEGKTFKVETKRPNKSFPYNSMEVSRRVGAAVLKNVKNLKVDVHNPDVLLNVEIREMAFVYAGVIEGIGGLPLGTNGKATVLLSGGIDSPVAAWMMMKRGVEVEAVYFHSPPYTSERAKDKVVDLCKVLSQYGQRIKLHVVHFTDLQLEIYEKCPPKFTTIIMRRMMMKIAEKIAQKNGSMALITGESLGQVASQTIESLYVTNASVSMPIFRPLIGMDKTEIIDLAQKISTFEISIRPYEDCCTIFVPKHPATKPKLEKVIEAEQKMEYQKYIDNFEEEVIEV.

The 105-residue stretch at Glu58 to Glu162 folds into the THUMP domain. Residues Leu178–Leu179, Tyr203–Phe204, Arg260, Gly282, and Gln291 each bind ATP.

Belongs to the ThiI family.

Its subcellular location is the cytoplasm. The enzyme catalyses [ThiI sulfur-carrier protein]-S-sulfanyl-L-cysteine + a uridine in tRNA + 2 reduced [2Fe-2S]-[ferredoxin] + ATP + H(+) = [ThiI sulfur-carrier protein]-L-cysteine + a 4-thiouridine in tRNA + 2 oxidized [2Fe-2S]-[ferredoxin] + AMP + diphosphate. It carries out the reaction [ThiS sulfur-carrier protein]-C-terminal Gly-Gly-AMP + S-sulfanyl-L-cysteinyl-[cysteine desulfurase] + AH2 = [ThiS sulfur-carrier protein]-C-terminal-Gly-aminoethanethioate + L-cysteinyl-[cysteine desulfurase] + A + AMP + 2 H(+). It participates in cofactor biosynthesis; thiamine diphosphate biosynthesis. Catalyzes the ATP-dependent transfer of a sulfur to tRNA to produce 4-thiouridine in position 8 of tRNAs, which functions as a near-UV photosensor. Also catalyzes the transfer of sulfur to the sulfur carrier protein ThiS, forming ThiS-thiocarboxylate. This is a step in the synthesis of thiazole, in the thiamine biosynthesis pathway. The sulfur is donated as persulfide by IscS. This is Probable tRNA sulfurtransferase from Thermoanaerobacter sp. (strain X514).